Consider the following 107-residue polypeptide: uncharacterized protein (107 aa).

The interval methionine 1–proline 32 is disordered. Positions aspartate 22 to glutamate 31 are enriched in basic and acidic residues.

This is an uncharacterized protein from Mus musculus (Mouse).